The sequence spans 73 residues: uncharacterized protein (73 aa).

This sequence belongs to the asfivirus DP63R family.

This is an uncharacterized protein from Ornithodoros (relapsing fever ticks).